The chain runs to 185 residues: Ribosome-recycling factor (185 aa).

Belongs to the RRF family.

The protein resides in the cytoplasm. Its function is as follows. Responsible for the release of ribosomes from messenger RNA at the termination of protein biosynthesis. May increase the efficiency of translation by recycling ribosomes from one round of translation to another. This is Ribosome-recycling factor from Listeria monocytogenes serovar 1/2a (strain ATCC BAA-679 / EGD-e).